The following is a 378-amino-acid chain: Pre-B-cell leukemia transcription factor 4 (378 aa).

Positions 1-15 (MAAPLRPVPPQPAPR) are enriched in pro residues. Disordered stretches follow at residues 1 to 24 (MAAPLRPVPPQPAPRRLPTTAPLG) and 100 to 125 (VSRPEKRGRGAAAGSTATPGGCPNDN). A PBC domain is found at 22–214 (PLGHDTSDVL…VMTLRSRFLD (193 aa)). The tract at residues 29–107 (DVLQQIMAIT…EGVSRPEKRG (79 aa)) is PBC-A. Residues 109–120 (GAAAGSTATPGG) show a composition bias toward low complexity. A PBC-B region spans residues 110–214 (AAAGSTATPG…VMTLRSRFLD (105 aa)). Residues 215–277 (ARRKRRNFSK…NKRIRYKKNT (63 aa)) constitute a DNA-binding region (homeobox; TALE-type). 2 disordered regions span residues 291 to 320 (ASTVTKARRPRGQSSCQSTPSPGPCGPLPL) and 355 to 378 (RAAPQPASSPAGESGSFNWDAASN). Residues 356–370 (AAPQPASSPAGESGS) show a composition bias toward low complexity.

This sequence belongs to the TALE/PBX homeobox family. Almost exclusively expressed in testis.

Its subcellular location is the nucleus. The sequence is that of Pre-B-cell leukemia transcription factor 4 (Pbx4) from Mus musculus (Mouse).